The following is a 117-amino-acid chain: UPF0102 protein FTW_1281 (117 aa).

It belongs to the UPF0102 family.

The protein is UPF0102 protein FTW_1281 of Francisella tularensis subsp. tularensis (strain WY96-3418).